Reading from the N-terminus, the 198-residue chain is Small ribosomal subunit protein uS7 (198 aa).

Belongs to the universal ribosomal protein uS7 family. As to quaternary structure, part of the 30S ribosomal subunit.

Functionally, one of the primary rRNA binding proteins, it binds directly to 16S rRNA where it nucleates assembly of the head domain of the 30S subunit. Is located at the subunit interface close to the decoding center. This is Small ribosomal subunit protein uS7 from Nanoarchaeum equitans (strain Kin4-M).